The sequence spans 492 residues: Cysteine--tRNA ligase (492 aa).

Cys-27 is a binding site for Zn(2+). The 'HIGH' region signature appears at 29-39; that stretch reads VTVYDLCHLGH. 3 residues coordinate Zn(2+): Cys-211, His-236, and Glu-240. The short motif at 268–272 is the 'KMSKS' region element; that stretch reads KMSKS. Lys-271 contacts ATP.

The protein belongs to the class-I aminoacyl-tRNA synthetase family. As to quaternary structure, monomer. Zn(2+) serves as cofactor.

It localises to the cytoplasm. The catalysed reaction is tRNA(Cys) + L-cysteine + ATP = L-cysteinyl-tRNA(Cys) + AMP + diphosphate. The protein is Cysteine--tRNA ligase of Prochlorococcus marinus subsp. pastoris (strain CCMP1986 / NIES-2087 / MED4).